The sequence spans 331 residues: Small ribosomal subunit protein uS2 (331 aa).

It belongs to the universal ribosomal protein uS2 family.

This chain is Small ribosomal subunit protein uS2, found in Rhodopseudomonas palustris (strain HaA2).